Reading from the N-terminus, the 486-residue chain is Receptor-interacting serine/threonine-protein kinase 3 (486 aa).

Ser-2 is modified (phosphoserine). The Protein kinase domain occupies 22–292 (LKKLEFVGKG…DCEPKTNEVY (271 aa)). ATP contacts are provided by residues 28 to 36 (VGKGGFGVV) and Lys-51. Asp-143 functions as the Proton acceptor in the catalytic mechanism. Ser-165 carries the phosphoserine modification. Thr-187 is modified (phosphothreonine). A Phosphoserine; by autocatalysis modification is found at Ser-204. At Thr-231 the chain carries Phosphothreonine; by autocatalysis. Ser-232 carries the post-translational modification Phosphoserine; by autocatalysis. The residue at position 257 (Thr-257) is a Phosphothreonine. Ser-304 and Ser-326 each carry phosphoserine. A disordered region spans residues 312–333 (QHRSSGRNLSAREPSQRGTEMD). Thr-338 is subject to Phosphothreonine. A disordered region spans residues 349–388 (LEEPSGPVPGKCPERQAQDTSVGPATPARTSSDPVAGTPQ). Phosphoserine is present on residues Ser-353, Ser-369, and Ser-380. A compositionally biased stretch (polar residues) spans 366–381 (QDTSVGPATPARTSSD). Phosphothreonine is present on Thr-392. The RIP homotypic interaction motif (RHIM) signature appears at 440–461 (LVFNNCSEVQIGNYNSLVAPPR). Positions 462-486 (TTASSSAKYDQAQFGRGRGWQPFHK) are disordered. Position 477 is an omega-N-methylarginine (Arg-477).

It belongs to the protein kinase superfamily. TKL Ser/Thr protein kinase family. As to quaternary structure, interacts (via RIP homotypic interaction motif) with RIPK1 (via RIP homotypic interaction motif); this interaction induces RIPK1 phosphorylation and formation of a RIPK1-RIPK3 necrosis-inducing complex. Interacts with MLKL; the interaction is direct and triggers necroptosis. Interacts with ZBP1 (via RIP homotypic interaction motif); interaction with ZBP1 activates RIPK3, triggering necroptosis. Upon TNF-induced necrosis, the RIPK1-RIPK3 dimer further interacts with PGAM5 and MLKL; the formation of this complex leads to PGAM5 phosphorylation and increase in PGAM5 phosphatase activity. Binds TRAF2 and is recruited to the TNFR-1 signaling complex. Interacts with PYGL, GLUL and GLUD1; these interactions result in activation of these metabolic enzymes. Interacts with BIRC2/c-IAP1, BIRC3/c-IAP2 and XIAP/BIRC4. Interacts with ARHGEF2. Interacts with PELI1 (via atypical FHA domain); the phosphorylated form at Thr-187 binds preferentially to PELI1. Interacts with BUB1B, TRAF2 and STUB1. Interacts with CASP6. Component of the AIM2 PANoptosome complex, a multiprotein complex that drives inflammatory cell death (PANoptosis). In terms of assembly, (Microbial infection) Interacts (via RIP homotypic interaction motif) with murid herpesvirus protein RIR1; this interaction disrupts RIP3-RIP1 interactions characteristic of TNF-alpha induced necroptosis, thereby suppressing this death pathway. RIPK1 and RIPK3 undergo reciprocal auto- and trans-phosphorylation. Autophosphorylated following interaction with ZBP1. Phosphorylation of Ser-204 plays a role in the necroptotic function of RIPK3. Autophosphorylates at Thr-231 and Ser-232 following activation by ZBP1: phosphorylation at these sites is a hallmark of necroptosis and is required for binding MLKL. Phosphorylation at Thr-187 is important for its kinase activity, interaction with PELI1 and for its ability to mediate TNF-induced necroptosis. In terms of processing, polyubiquitinated with 'Lys-48' and 'Lys-63'-linked chains by BIRC2/c-IAP1 and BIRC3/c-IAP2, leading to activation of NF-kappa-B. Ubiquitinated by STUB1 leading to its subsequent proteasome-dependent degradation. As to expression, expressed in embryo and in adult spleen, liver, testis, heart, brain and lung.

The protein localises to the cytoplasm. Its subcellular location is the cytosol. The protein resides in the nucleus. It catalyses the reaction L-seryl-[protein] + ATP = O-phospho-L-seryl-[protein] + ADP + H(+). The catalysed reaction is L-threonyl-[protein] + ATP = O-phospho-L-threonyl-[protein] + ADP + H(+). Activity is stimulated by ZBP1, which senses double-stranded Z-RNA structures. RIPK3-dependent necroptosis is inhibited by RIPK1: RIPK1 prevents the ZBP1-induced activation of RIPK3 via FADD-mediated recruitment of CASP8, which cleaves RIPK1 and limits TNF-induced necroptosis. Inhibited by type II inhibitor 1-(4-fluorophenyl)-N-[3-fluoro-4-(1H-pyrrolo[2,3-b]pyridin-4-yloxy)phenyl]-2-oxo-1,2-dihydropyridine-3-carboxamide. Functionally, serine/threonine-protein kinase that activates necroptosis and apoptosis, two parallel forms of cell death. Necroptosis, a programmed cell death process in response to death-inducing TNF-alpha family members, is triggered by RIPK3 following activation by ZBP1. Activated RIPK3 forms a necrosis-inducing complex and mediates phosphorylation of MLKL, promoting MLKL localization to the plasma membrane and execution of programmed necrosis characterized by calcium influx and plasma membrane damage. In addition to TNF-induced necroptosis, necroptosis can also take place in the nucleus in response to orthomyxoviruses infection: following ZBP1 activation, which senses double-stranded Z-RNA structures, nuclear RIPK3 catalyzes phosphorylation and activation of MLKL, promoting disruption of the nuclear envelope and leakage of cellular DNA into the cytosol. Also regulates apoptosis: apoptosis depends on RIPK1, FADD and CASP8, and is independent of MLKL and RIPK3 kinase activity. Phosphorylates RIPK1: RIPK1 and RIPK3 undergo reciprocal auto- and trans-phosphorylation. In some cell types, also able to restrict viral replication by promoting cell death-independent responses. In response to flavivirus infection in neurons, promotes a cell death-independent pathway that restricts viral replication: together with ZBP1, promotes a death-independent transcriptional program that modifies the cellular metabolism via up-regulation expression of the enzyme ACOD1/IRG1 and production of the metabolite itaconate. Itaconate inhibits the activity of succinate dehydrogenase, generating a metabolic state in neurons that suppresses replication of viral genomes. RIPK3 binds to and enhances the activity of three metabolic enzymes: GLUL, GLUD1, and PYGL. These metabolic enzymes may eventually stimulate the tricarboxylic acid cycle and oxidative phosphorylation, which could result in enhanced ROS production. The chain is Receptor-interacting serine/threonine-protein kinase 3 from Mus musculus (Mouse).